Here is a 198-residue protein sequence, read N- to C-terminus: 7-methyl-GTP pyrophosphatase (198 aa).

Asp72 serves as the catalytic Proton acceptor.

The protein belongs to the Maf family. YceF subfamily. A divalent metal cation is required as a cofactor.

Its subcellular location is the cytoplasm. It carries out the reaction N(7)-methyl-GTP + H2O = N(7)-methyl-GMP + diphosphate + H(+). Functionally, nucleoside triphosphate pyrophosphatase that hydrolyzes 7-methyl-GTP (m(7)GTP). May have a dual role in cell division arrest and in preventing the incorporation of modified nucleotides into cellular nucleic acids. The protein is 7-methyl-GTP pyrophosphatase of Idiomarina loihiensis (strain ATCC BAA-735 / DSM 15497 / L2-TR).